A 154-amino-acid polypeptide reads, in one-letter code: Ribonuclease H (154 aa).

Residues 1 to 142 enclose the RNase H type-1 domain; the sequence is MEKTVEIYTD…VDDLARDAAG (142 aa). Mg(2+)-binding residues include Asp-10, Glu-48, Asp-70, and Asp-134.

Belongs to the RNase H family. In terms of assembly, monomer. It depends on Mg(2+) as a cofactor.

The protein localises to the cytoplasm. The enzyme catalyses Endonucleolytic cleavage to 5'-phosphomonoester.. Its function is as follows. Endonuclease that specifically degrades the RNA of RNA-DNA hybrids. This is Ribonuclease H from Pseudoalteromonas translucida (strain TAC 125).